Consider the following 260-residue polypeptide: Apolipoprotein A-I (260 aa).

A signal peptide spans 1–18 (MKFAALALALLLAVGSHA). The segment at 32 to 63 (ARAVLDVYLTQVKDMSLRAVNQLDDPQYAEFK) is 3 X approximate tandem repeats. 2 tandem repeats follow at residues 64–85 (TNLA…GSVS) and 87–107 (MTDS…ESLN). The segment at 64–260 (TNLAQRIEEM…EIIAASVTKS (197 aa)) is 10 X approximate tandem repeats. Residues 108–118 (VDLEALKSSLA) form a 3; half-length repeat. 5 tandem repeats follow at residues 119–140 (PQNE…TLLT), 141–162 (PIYN…TRLE), 163–184 (PVME…AVLM), 185–206 (PMVE…EVVQ), and 207–225 (PYVQ…QAQT). A 9; half-length repeat occupies 226–236 (VDTDALRTKIT). Copy 10 of the repeat occupies 237 to 260 (PLVEEIKVKMNAIFEIIAASVTKS).

This sequence belongs to the apolipoprotein A1/A4/E family. Strong expression in liver with lower expression in intestine.

It localises to the secreted. Its function is as follows. Participates in the reverse transport of cholesterol from tissues to the liver for excretion by promoting cholesterol efflux from tissues and by acting as a cofactor for the lecithin cholesterol acyltransferase (LCAT). This is Apolipoprotein A-I (apoa1) from Sparus aurata (Gilthead sea bream).